Reading from the N-terminus, the 460-residue chain is Capsid vertex component 1 (460 aa).

Residues 167–197 are disordered; it reads VQNSTGQDHRSPVNDNNEHTVTPGPLEPPSV. A compositionally biased stretch (basic and acidic residues) spans 173–184; that stretch reads QDHRSPVNDNNE.

This sequence belongs to the herpesviridae CVC1 protein family. As to quaternary structure, interacts (via C-terminus) with capsid vertex component 2/CVC2.

It localises to the virion. The protein resides in the host nucleus. In terms of biological role, capsid vertex-specific component that plays a role during viral DNA encapsidation, assuring correct genome cleavage and presumably stabilizing capsids that contain full-length viral genomes. This chain is Capsid vertex component 1, found in Elephantid herpesvirus 1 (isolate Asian elephant/Berlin/Kiba/1998) (EIHV-1).